Here is a 202-residue protein sequence, read N- to C-terminus: Small ribosomal subunit protein uS4c (202 aa).

An S4 RNA-binding domain is found at 90-152; the sequence is MRLDNVIFRL…RKSESIINKN (63 aa).

It belongs to the universal ribosomal protein uS4 family. In terms of assembly, part of the 30S ribosomal subunit. Contacts protein S5. The interaction surface between S4 and S5 is involved in control of translational fidelity.

The protein resides in the plastid. It localises to the chloroplast. Functionally, one of the primary rRNA binding proteins, it binds directly to 16S rRNA where it nucleates assembly of the body of the 30S subunit. With S5 and S12 plays an important role in translational accuracy. The sequence is that of Small ribosomal subunit protein uS4c (rps4) from Dendrohypopterygium filiculiforme (Moss).